We begin with the raw amino-acid sequence, 501 residues long: Aldehyde dehydrogenase 1A1 (501 aa).

S2 carries the N-acetylserine modification. Residues K91 and K128 each carry the N6-acetyllysine modification. Residues 167–170 (IPWN), 193–196 (KPAE), 226–227 (GP), and 246–247 (GS) each bind NAD(+). At K252 the chain carries N6-acetyllysine. Residue E269 is the Proton acceptor of the active site. Residue 269–271 (ELG) participates in NAD(+) binding. Residue C303 is the Nucleophile of the active site. The interval 336 to 501 (LTPGINQGPQ…VAMKISQKNS (166 aa)) is mediates interaction with PRMT3. T337 carries the post-translational modification Phosphothreonine. Residue 349–353 (EQHDK) participates in NAD(+) binding. Residues K353 and K367 each carry the N6-acetyllysine modification. 400-402 (EIF) is an NAD(+) binding site. K410 bears the N6-acetyllysine mark. S413 is modified (phosphoserine). 3 positions are modified to N6-acetyllysine: K419, K435, and K495.

This sequence belongs to the aldehyde dehydrogenase family. As to quaternary structure, homotetramer. Interacts with PRMT3; the interaction is direct, inhibits ALDH1A1 aldehyde dehydrogenase activity and is independent of the methyltransferase activity of PRMT3. The N-terminus is blocked most probably by acetylation. In terms of tissue distribution, expressed in retina. Expressed in lens and cornea (at protein level). Expressed by midbrain dopamine neurons.

The protein resides in the cytoplasm. Its subcellular location is the cytosol. It is found in the cell projection. The protein localises to the axon. It catalyses the reaction an aldehyde + NAD(+) + H2O = a carboxylate + NADH + 2 H(+). It carries out the reaction all-trans-retinal + NAD(+) + H2O = all-trans-retinoate + NADH + 2 H(+). The catalysed reaction is 9-cis-retinal + NAD(+) + H2O = 9-cis-retinoate + NADH + 2 H(+). The enzyme catalyses 11-cis-retinal + NAD(+) + H2O = 11-cis-retinoate + NADH + 2 H(+). It catalyses the reaction 13-cis-retinal + NAD(+) + H2O = 13-cis-retinoate + NADH + 2 H(+). It carries out the reaction 4-aminobutanal + NAD(+) + H2O = 4-aminobutanoate + NADH + 2 H(+). The catalysed reaction is 3-deoxyglucosone + NAD(+) + H2O = 2-dehydro-3-deoxy-D-gluconate + NADH + 2 H(+). The enzyme catalyses (E)-4-hydroxynon-2-enal + NAD(+) + H2O = (E)-4-hydroxynon-2-enoate + NADH + 2 H(+). It catalyses the reaction malonaldehyde + NAD(+) + H2O = 3-oxopropanoate + NADH + 2 H(+). It carries out the reaction hexanal + NAD(+) + H2O = hexanoate + NADH + 2 H(+). The catalysed reaction is propanal + NAD(+) + H2O = propanoate + NADH + 2 H(+). The enzyme catalyses acetaldehyde + NAD(+) + H2O = acetate + NADH + 2 H(+). It catalyses the reaction benzaldehyde + NAD(+) + H2O = benzoate + NADH + 2 H(+). It functions in the pathway cofactor metabolism; retinol metabolism. With respect to regulation, the aminobutyraldehyde dehydrogenase activity is negatively regulated by ethanol in vivo. In terms of biological role, cytosolic dehydrogenase that catalyzes the irreversible oxidation of a wide range of aldehydes to their corresponding carboxylic acid. Functions downstream of retinol dehydrogenases and catalyzes the oxidation of retinaldehyde into retinoic acid, the second step in the oxidation of retinol/vitamin A into retinoic acid. This pathway is crucial to control the levels of retinol and retinoic acid, two important molecules which excess can be teratogenic and cytotoxic. Also oxidizes aldehydes resulting from lipid peroxidation like (E)-4-hydroxynon-2-enal/HNE, malonaldehyde and hexanal that form protein adducts and are highly cytotoxic. By participating for instance to the clearance of (E)-4-hydroxynon-2-enal/HNE in the lens epithelium prevents the formation of HNE-protein adducts and lens opacification. Also functions downstream of fructosamine-3-kinase in the fructosamine degradation pathway by catalyzing the oxidation of 3-deoxyglucosone, the carbohydrate product of fructosamine 3-phosphate decomposition, which is itself a potent glycating agent that may react with lysine and arginine side-chains of proteins. Also has an aminobutyraldehyde dehydrogenase activity and is probably part of an alternative pathway for the biosynthesis of GABA/4-aminobutanoate in midbrain, thereby playing a role in GABAergic synaptic transmission. This is Aldehyde dehydrogenase 1A1 from Mus musculus (Mouse).